The chain runs to 187 residues: Protein GrpE (187 aa).

The interval 1–22 is disordered; the sequence is MADEQNLDAQAQDQAAEAGAGD. Residues 7–22 are compositionally biased toward low complexity; it reads LDAQAQDQAAEAGAGD.

This sequence belongs to the GrpE family. Homodimer.

Its subcellular location is the cytoplasm. In terms of biological role, participates actively in the response to hyperosmotic and heat shock by preventing the aggregation of stress-denatured proteins, in association with DnaK and GrpE. It is the nucleotide exchange factor for DnaK and may function as a thermosensor. Unfolded proteins bind initially to DnaJ; upon interaction with the DnaJ-bound protein, DnaK hydrolyzes its bound ATP, resulting in the formation of a stable complex. GrpE releases ADP from DnaK; ATP binding to DnaK triggers the release of the substrate protein, thus completing the reaction cycle. Several rounds of ATP-dependent interactions between DnaJ, DnaK and GrpE are required for fully efficient folding. This is Protein GrpE from Pseudomonas syringae pv. tomato (strain ATCC BAA-871 / DC3000).